Consider the following 582-residue polypeptide: UPF0329 protein ECU07_0070 (582 aa).

Residues 326–386 (EEKAKSKKKG…KTGKKSKGDQ (61 aa)) form a disordered region. Over residues 330 to 339 (KSKKKGKKKS) the composition is skewed to basic residues. Over residues 344-354 (EAKEEEKKESG) the composition is skewed to basic and acidic residues.

Belongs to the UPF0329 family.

In Encephalitozoon cuniculi (strain GB-M1) (Microsporidian parasite), this protein is UPF0329 protein ECU07_0070.